Here is a 471-residue protein sequence, read N- to C-terminus: MKIKTRFAPSPTGYLHVGGARTALYSWLFSRHLGGEFVLRIEDTDLERSTQEAIDAIMDGMNWLNLDWDEGPYFQTKRFDRYNAVIDQMLDAGTAYRCYCSKERLEALREAQMANGEKPRYDGHCRDSQCTHGADEPSVVRFRNPQEGSVIFDDKIRGPIEFSNQELDDLIIRRTDGSPTYNFCVVIDDWDMEITHVIRGEDHINNTPRQINILKALGAPVPEYAHVSMILGDDGKKLSKRHGAVGVMQYRDDGYLPEALLNYLVRLGWSHGDQEIFSIEEMTQLFTLDAVSKSASAFNTEKLQWLNHHYINSLPPEQVAVHLSWHVEQLGIDTRNGPELVEIVKLLGERCKTLKEMAESCRYFYEEFDAFDVDAAKKHLRPVARQPLEAVKVKLAAITEWTTENVHNAIQGTADELGVGMGKVGMPLRVAVTGVGQSPGMDVTVHAIGQARTLARIDKALAFISEREAQQ.

The short motif at Pro-9–Gly-19 is the 'HIGH' region element. Zn(2+) contacts are provided by Cys-98, Cys-100, Cys-125, and Asp-127. A 'KMSKS' region motif is present at residues Lys-237–Arg-241. Lys-240 serves as a coordination point for ATP.

It belongs to the class-I aminoacyl-tRNA synthetase family. Glutamate--tRNA ligase type 1 subfamily. In terms of assembly, monomer. The cofactor is Zn(2+).

Its subcellular location is the cytoplasm. It catalyses the reaction tRNA(Glu) + L-glutamate + ATP = L-glutamyl-tRNA(Glu) + AMP + diphosphate. In terms of biological role, catalyzes the attachment of glutamate to tRNA(Glu) in a two-step reaction: glutamate is first activated by ATP to form Glu-AMP and then transferred to the acceptor end of tRNA(Glu). The sequence is that of Glutamate--tRNA ligase from Yersinia pseudotuberculosis serotype O:1b (strain IP 31758).